The sequence spans 528 residues: ATP synthase subunit alpha 1 (528 aa).

An ATP-binding site is contributed by 177-184 (GDRQTGKT).

The protein belongs to the ATPase alpha/beta chains family. As to quaternary structure, F-type ATPases have 2 components, CF(1) - the catalytic core - and CF(0) - the membrane proton channel. CF(1) has five subunits: alpha(3), beta(3), gamma(1), delta(1), epsilon(1). CF(0) has three main subunits: a(1), b(2) and c(9-12). The alpha and beta chains form an alternating ring which encloses part of the gamma chain. CF(1) is attached to CF(0) by a central stalk formed by the gamma and epsilon chains, while a peripheral stalk is formed by the delta and b chains.

Its subcellular location is the cell inner membrane. The catalysed reaction is ATP + H2O + 4 H(+)(in) = ADP + phosphate + 5 H(+)(out). Functionally, produces ATP from ADP in the presence of a proton gradient across the membrane. The alpha chain is a regulatory subunit. This is ATP synthase subunit alpha 1 from Pseudoalteromonas atlantica (strain T6c / ATCC BAA-1087).